Here is a 738-residue protein sequence, read N- to C-terminus: Putative RNA-binding protein EEED8.10 (738 aa).

The RRM domain occupies 112–201 (RKIVVSNISA…QVMVVSAYVS (90 aa)). A disordered region spans residues 211-237 (LSDDVGSREDTPLSRASSTQSLASGSE). Residues 224–237 (SRASSTQSLASGSE) are compositionally biased toward polar residues. The F-box domain maps to 239-297 (SFNLGNVPDKILRRVISFLPIHETIRLERVNKKFMEESIKSWELVNKIALARETVFNKQ).

In Caenorhabditis elegans, this protein is Putative RNA-binding protein EEED8.10.